Reading from the N-terminus, the 301-residue chain is Protein URE2 (301 aa).

Residues 59–143 (DGYTLFSHRS…YLVSKYLRDN (85 aa)) form the GST N-terminal domain. The 150-residue stretch at 152-301 (NIVEQSQISS…PAVIRALRGD (150 aa)) folds into the GST C-terminal domain.

This sequence belongs to the GST superfamily. In terms of assembly, homodimer.

Its function is as follows. Plays an important role in the cellular response to the nitrogen source. URE2 gene plays a major part in the repression of GLN1 and GDH2 genes by glutamine, and is required for the inactivation of glutamine synthetase. URE2 gene product may catalytically inactivate GLN3 in response to an increase in the intracellular concentration of glutamine. The chain is Protein URE2 (URE2) from Meyerozyma guilliermondii (strain ATCC 6260 / CBS 566 / DSM 6381 / JCM 1539 / NBRC 10279 / NRRL Y-324) (Yeast).